We begin with the raw amino-acid sequence, 465 residues long: Cyclin-A1 (465 aa).

The protein belongs to the cyclin family. Cyclin AB subfamily. As to quaternary structure, interacts with the CDK2 and the CDC2 protein kinases to form a serine/threonine kinase holoenzyme complex. The cyclin subunit imparts substrate specificity to the complex. Does not bind CDK4 and CDK5 (in vitro). The cyclin A1-CDK2 complex interacts with transcription factor E2F-1 and RB proteins. Found in a complex with CDK2, CABLES1 and CCNE1. Interacts with INCA1. Interacts with KLHDC9. Polyubiquitinated via 'Lys-11'-linked ubiquitin by the anaphase-promoting complex (APC/C), leading to its degradation by the proteasome. Deubiquitinated and stabilized by USP37 enables entry into S phase. Ubiquitinated during the G1 phase by the SCF(FBXO31) complex, leading to its proteasomal degradation. In terms of tissue distribution, very high levels in testis and very low levels in brain. Also found in myeloid leukemia cell lines.

It is found in the nucleus. In terms of biological role, may be involved in the control of the cell cycle at the G1/S (start) and G2/M (mitosis) transitions. May primarily function in the control of the germline meiotic cell cycle and additionally in the control of mitotic cell cycle in some somatic cells. This chain is Cyclin-A1 (CCNA1), found in Homo sapiens (Human).